The following is a 179-amino-acid chain: SCAN domain-containing protein 1 (179 aa).

The segment at 1 to 108 is disordered; that stretch reads MAATEPILAA…GSRLGPETFR (108 aa). Over residues 60 to 80 the composition is skewed to low complexity; sequence AIPTPQAAASAAPELPLGPAP. The SCAN box domain occupies 108–166; the sequence is RQRFRQFRYQDAAGPREAFRQLRELSRQWLRPDIRTKEQIVEMLVQEQLLAILPEAARA.

Interacts with ZNF202.

The protein resides in the nucleus. In terms of biological role, may regulate transcriptional activity. The chain is SCAN domain-containing protein 1 (SCAND1) from Pongo pygmaeus (Bornean orangutan).